We begin with the raw amino-acid sequence, 197 residues long: MAKNGLVICILVITLLLDQTTSHTSRLKARKHSKRRVRDKDGDLKTQIEKLWTEVNALKEIQALQTVCLRGTKVHKKCYLASEGLKHFHEANEDCISKGGILVIPRNSDEINALQDYGKRSLPGVNDFWLGINDMVTEGKFVDVNGIAISFLNWDRAQPNGGKRENCVLFSQSAQGKWSDEACRSSKRYICEFTIPQ.

A signal peptide spans 1-22 (MAKNGLVICILVITLLLDQTTS). 3 disulfide bridges follow: Cys68-Cys78, Cys95-Cys191, and Cys167-Cys183. The region spanning 74–192 (VHKKCYLASE…CRSSKRYICE (119 aa)) is the C-type lectin domain.

As to expression, restricted to cartilage and breast. Also expressed in breast cancers.

Its subcellular location is the secreted. In terms of biological role, promotes cell adhesion to laminin-332 and fibronectin. The chain is C-type lectin domain family 3 member A (CLEC3A) from Homo sapiens (Human).